The chain runs to 150 residues: Ribonuclease K6 (150 aa).

A signal peptide spans 1-23 (MVLCFPLLLLLLVLWGPVCLLHA). The active-site Proton acceptor is the His38. Intrachain disulfides connect Cys46–Cys104, Cys60–Cys114, Cys78–Cys129, and Cys85–Cys92. Asn55 is a glycosylation site (N-linked (GlcNAc...) asparagine). Residues 61–65 (KHQNT) and Lys86 each bind substrate. Residue Asn100 is glycosylated (N-linked (GlcNAc...) asparagine). Arg105 is a binding site for substrate. The active-site Proton donor is His145.

The protein belongs to the pancreatic ribonuclease family. In terms of assembly, interacts (via N-terminus) with bacterial lipopolysaccharide (LPS).

Its subcellular location is the secreted. It localises to the lysosome. The protein localises to the cytoplasmic granule. Its function is as follows. Ribonuclease which shows a preference for the pyrimidines uridine and cytosine. Has potent antibacterial activity against a range of Gram-positive and Gram-negative bacteria, including P.aeruginosa, A.baumanii, M.luteus, S.aureus, E.faecalis, E.faecium, S.saprophyticus and E.coli. Causes loss of bacterial membrane integrity, and also promotes agglutination of Gram-negative bacteria. Probably contributes to urinary tract sterility. Bactericidal activity is independent of RNase activity. In Miopithecus talapoin (Angolan talapoin), this protein is Ribonuclease K6 (RNASE6).